A 132-amino-acid chain; its full sequence is Small ribosomal subunit protein uS8 (132 aa).

Belongs to the universal ribosomal protein uS8 family. As to quaternary structure, part of the 30S ribosomal subunit. Contacts proteins S5 and S12.

Its function is as follows. One of the primary rRNA binding proteins, it binds directly to 16S rRNA central domain where it helps coordinate assembly of the platform of the 30S subunit. This Gluconobacter oxydans (strain 621H) (Gluconobacter suboxydans) protein is Small ribosomal subunit protein uS8.